Reading from the N-terminus, the 330-residue chain is MIKVAIVGGSGYIGGELIRLLAMHPEVEIVAVTSREYAGKKVHKVHPNLRGLNLRFTSDYNFDADVIFLAVPHGVSMKLINEFLGSAKIIDLSADFRVRKELYEKYYGKHERPELIEDFVYGLPEIHRKEIKKAELVANPGCNATAVILALYPFKDLTKEVLVDLKVSSSAGGRRENLPSIHPERSNVVRVYKPYHHRHEAEVLQETGVRAMFTVHSVDIVRGLLATIYFTFEGNEKDLLKRMLIYKDEPFIRLVVDKGGLQRYPDPKYVLGSNFVDLGLAYDEENSRVIVFSALDNLIKGGAGQAVQNMNIMFGLDETLGLGYYPLYPV.

NADP(+) is bound at residue 10–13 (SGYI). Residue Cys-142 is part of the active site. Asn-297 contacts NADP(+).

This sequence belongs to the NAGSA dehydrogenase family. Type 1 subfamily. LysY sub-subfamily.

It localises to the cytoplasm. It carries out the reaction [amino-group carrier protein]-C-terminal-N-(1-carboxy-5-oxopentan-1-yl)-L-glutamine + phosphate + NADP(+) = [amino-group carrier protein]-C-terminal-N-(1-carboxy-5-phosphooxy-5-oxopentan-1-yl)-L-glutamine + NADPH + H(+). It catalyses the reaction [amino-group carrier protein]-C-terminal-gamma-(L-glutamyl-5-semialdehyde)-L-glutamate + phosphate + NADP(+) = [amino-group carrier protein]-C-terminal-gamma-(5-phospho-L-glutamyl)-L-glutamate + NADPH + H(+). It participates in amino-acid biosynthesis; L-lysine biosynthesis via AAA pathway; L-lysine from L-alpha-aminoadipate (Thermus route): step 3/5. It functions in the pathway amino-acid biosynthesis; L-arginine biosynthesis. In terms of biological role, involved in both the arginine and lysine biosynthetic pathways. The chain is Putative [LysW]-L-2-aminoadipate/[LysW]-L-glutamate phosphate reductase from Pyrococcus horikoshii (strain ATCC 700860 / DSM 12428 / JCM 9974 / NBRC 100139 / OT-3).